Here is a 130-residue protein sequence, read N- to C-terminus: Ribosome-binding factor A (130 aa).

The protein belongs to the RbfA family. In terms of assembly, monomer. Binds 30S ribosomal subunits, but not 50S ribosomal subunits or 70S ribosomes.

The protein resides in the cytoplasm. One of several proteins that assist in the late maturation steps of the functional core of the 30S ribosomal subunit. Associates with free 30S ribosomal subunits (but not with 30S subunits that are part of 70S ribosomes or polysomes). Required for efficient processing of 16S rRNA. May interact with the 5'-terminal helix region of 16S rRNA. This is Ribosome-binding factor A from Flavobacterium johnsoniae (strain ATCC 17061 / DSM 2064 / JCM 8514 / BCRC 14874 / CCUG 350202 / NBRC 14942 / NCIMB 11054 / UW101) (Cytophaga johnsonae).